Here is a 193-residue protein sequence, read N- to C-terminus: Adenine phosphoribosyltransferase (193 aa).

It belongs to the purine/pyrimidine phosphoribosyltransferase family. As to quaternary structure, homodimer.

The protein resides in the cytoplasm. The catalysed reaction is AMP + diphosphate = 5-phospho-alpha-D-ribose 1-diphosphate + adenine. Its pathway is purine metabolism; AMP biosynthesis via salvage pathway; AMP from adenine: step 1/1. Its function is as follows. Catalyzes a salvage reaction resulting in the formation of AMP, that is energically less costly than de novo synthesis. The protein is Adenine phosphoribosyltransferase of Chromobacterium violaceum (strain ATCC 12472 / DSM 30191 / JCM 1249 / CCUG 213 / NBRC 12614 / NCIMB 9131 / NCTC 9757 / MK).